A 312-amino-acid chain; its full sequence is MPQQSMQASLIDPIAEIERSNCKIAHLRLGLVFTSDNNERALQDSGLYSPDSEDSSVDIAGRRFHSGTLNGSSIVYVKTGSPSVNMATTLQILLVRFNIHGVIYFGNAGSLDKKTMVPGDVSVPQAVAFTGVWNWKKFGSEKGKLVFGDFNYPENGENLLGTVEYEKIKMFSPSEAPKEVFWLPITKSWYNAATEALKDMKLRKCYSDECLPGKPKVVFGSKSSTSDFYVRNKAYGDFLNDNFDAKTADTASASVALTSLSNEKLFVVFQGVSNVAGETSSNSRVSYLASYNAFLAATKFINSIPTPRLACE.

An N-terminal signal peptide occupies residues 1–24; sequence MPQQSMQASLIDPIAEIERSNCKI. N-linked (GlcNAc...) asparagine glycosylation occurs at N70.

It to wound-inducible poplar endochitinases. Monomer. As to expression, bark.

Functionally, may play a role in nitrogen storage. The chain is Bark storage protein A (BSPA) from Populus deltoides (Eastern poplar).